The sequence spans 364 residues: Carbamoyl phosphate synthase small chain (364 aa).

2 CPSase regions span residues 1–167 and 1–171; these read MKRQ…PSPG and MKRQ…RGER. Serine 45, glycine 219, and glycine 221 together coordinate L-glutamine. The Glutamine amidotransferase type-1 domain occupies 171–358; that stretch reads RIVLIDFGMK…LALIREFNKK (188 aa). The active-site Nucleophile is cysteine 246. 5 residues coordinate L-glutamine: leucine 247, glutamine 250, asparagine 288, glycine 290, and tyrosine 291. Active-site residues include histidine 331 and glutamate 333.

Belongs to the CarA family. In terms of assembly, composed of two chains; the small (or glutamine) chain promotes the hydrolysis of glutamine to ammonia, which is used by the large (or ammonia) chain to synthesize carbamoyl phosphate. Tetramer of heterodimers (alpha,beta)4.

It carries out the reaction hydrogencarbonate + L-glutamine + 2 ATP + H2O = carbamoyl phosphate + L-glutamate + 2 ADP + phosphate + 2 H(+). The catalysed reaction is L-glutamine + H2O = L-glutamate + NH4(+). It participates in amino-acid biosynthesis; L-arginine biosynthesis; carbamoyl phosphate from bicarbonate: step 1/1. Its pathway is pyrimidine metabolism; UMP biosynthesis via de novo pathway; (S)-dihydroorotate from bicarbonate: step 1/3. Functionally, small subunit of the glutamine-dependent carbamoyl phosphate synthetase (CPSase). CPSase catalyzes the formation of carbamoyl phosphate from the ammonia moiety of glutamine, carbonate, and phosphate donated by ATP, constituting the first step of 2 biosynthetic pathways, one leading to arginine and/or urea and the other to pyrimidine nucleotides. The small subunit (glutamine amidotransferase) binds and cleaves glutamine to supply the large subunit with the substrate ammonia. The sequence is that of Carbamoyl phosphate synthase small chain from Bacillus caldolyticus.